The sequence spans 299 residues: ATP phosphoribosyltransferase (299 aa).

It belongs to the ATP phosphoribosyltransferase family. Long subfamily. The cofactor is Mg(2+).

It is found in the cytoplasm. The catalysed reaction is 1-(5-phospho-beta-D-ribosyl)-ATP + diphosphate = 5-phospho-alpha-D-ribose 1-diphosphate + ATP. Its pathway is amino-acid biosynthesis; L-histidine biosynthesis; L-histidine from 5-phospho-alpha-D-ribose 1-diphosphate: step 1/9. With respect to regulation, feedback inhibited by histidine. Its function is as follows. Catalyzes the condensation of ATP and 5-phosphoribose 1-diphosphate to form N'-(5'-phosphoribosyl)-ATP (PR-ATP). Has a crucial role in the pathway because the rate of histidine biosynthesis seems to be controlled primarily by regulation of HisG enzymatic activity. The chain is ATP phosphoribosyltransferase from Shewanella woodyi (strain ATCC 51908 / MS32).